We begin with the raw amino-acid sequence, 902 residues long: Aconitate hydratase A (902 aa).

C441, C507, and C510 together coordinate [4Fe-4S] cluster.

The protein belongs to the aconitase/IPM isomerase family. Monomer. It depends on [4Fe-4S] cluster as a cofactor.

The catalysed reaction is citrate = D-threo-isocitrate. It catalyses the reaction (2S,3R)-3-hydroxybutane-1,2,3-tricarboxylate = 2-methyl-cis-aconitate + H2O. Its pathway is carbohydrate metabolism; tricarboxylic acid cycle; isocitrate from oxaloacetate: step 2/2. The protein operates within organic acid metabolism; propanoate degradation. Functionally, involved in the catabolism of short chain fatty acids (SCFA) via the tricarboxylic acid (TCA)(acetyl degradation route) and probably the 2-methylcitrate cycle I (propionate degradation route). Catalyzes the reversible isomerization of citrate to isocitrate via cis-aconitate. Also able to catalyze the hydration of cis-homoaconitate to yield (R)-homocitrate, but with a lower efficiency. Could catalyze the hydration of 2-methyl-cis-aconitate to yield (2R,3S)-2-methylisocitrate. The apo form of AcnA functions as a RNA-binding regulatory protein. The protein is Aconitate hydratase A (acoA) of Thermus thermophilus (strain ATCC 27634 / DSM 579 / HB8).